Here is a 937-residue protein sequence, read N- to C-terminus: Bifunctional glutamine synthetase adenylyltransferase/adenylyl-removing enzyme (937 aa).

Residues 1–436 (MSQPIPSASP…AAEFAELLAP (436 aa)) are adenylyl removase. The segment at 443–937 (PDTLADYWRA…QLRFQPGKGA (495 aa)) is adenylyl transferase.

It belongs to the GlnE family. It depends on Mg(2+) as a cofactor.

It carries out the reaction [glutamine synthetase]-O(4)-(5'-adenylyl)-L-tyrosine + phosphate = [glutamine synthetase]-L-tyrosine + ADP. The catalysed reaction is [glutamine synthetase]-L-tyrosine + ATP = [glutamine synthetase]-O(4)-(5'-adenylyl)-L-tyrosine + diphosphate. Its function is as follows. Involved in the regulation of glutamine synthetase GlnA, a key enzyme in the process to assimilate ammonia. When cellular nitrogen levels are high, the C-terminal adenylyl transferase (AT) inactivates GlnA by covalent transfer of an adenylyl group from ATP to specific tyrosine residue of GlnA, thus reducing its activity. Conversely, when nitrogen levels are low, the N-terminal adenylyl removase (AR) activates GlnA by removing the adenylyl group by phosphorolysis, increasing its activity. The regulatory region of GlnE binds the signal transduction protein PII (GlnB) which indicates the nitrogen status of the cell. This chain is Bifunctional glutamine synthetase adenylyltransferase/adenylyl-removing enzyme, found in Xanthomonas campestris pv. campestris (strain B100).